Consider the following 445-residue polypeptide: Rab GDP dissociation inhibitor beta (445 aa).

M1 carries the post-translational modification N-acetylmethionine. K57 carries the N6-succinyllysine modification. K112 carries the post-translational modification N6-acetyllysine. Residue S130 is modified to Phosphoserine. N6-acetyllysine is present on K269. A Phosphoserine modification is found at S382.

This sequence belongs to the Rab GDI family. Interacts with RHOH. Interacts with the GDP-bound inactive forms of RAB3A, RAB3B, RAB3C, RAB5A, RAB5B, RAB5C, RAB8A, RAB8B, RAB10, RAB12, RAB35, and RAB43; binds RAB3D to a lesser extent. Interacts with DZIP1; this interaction negatively regulates the interaction of GDI2 with GDP-bound RAB8A. In terms of tissue distribution, ubiquitously expressed.

The protein localises to the cytoplasm. It is found in the membrane. Its subcellular location is the golgi apparatus. The protein resides in the trans-Golgi network. In terms of biological role, GDP-dissociation inhibitor preventing the GDP to GTP exchange of most Rab proteins. By keeping these small GTPases in their inactive GDP-bound form regulates intracellular membrane trafficking. Negatively regulates protein transport to the cilium and ciliogenesis through the inhibition of RAB8A. The polypeptide is Rab GDP dissociation inhibitor beta (Gdi2) (Rattus norvegicus (Rat)).